Here is a 462-residue protein sequence, read N- to C-terminus: MTMKRALPSPSSLLFFFLLITPLFLCQENRVSASMPPSESETLFKIMESMSSDQQWRQSHPNPCAPGSSWPGIECKTGPDHLSHVSRLDFGSAPNPSCKSSASFPSSIFTLPFLQSVFFFNCFTHFPTTIMFPIKLIPNSSLQQLSLRSNPSLSGQIPPRISSLKSLQILTLSQNRLTGDIPPAIFSLKSLVHLDLSYNKLTGKIPLQLGNLNNLVGLDLSYNSLTGTIPPTISQLGMLQKLDLSSNSLFGRIPEGVEKLRSLSFMALSNNKLKGAFPKGISNLQSLQYFIMDNNPMFVALPVELGFLPKLQELQLENSGYSGVIPESYTKLTNLSSLSLANNRLTGEIPSGFESLPHVFHLNLSRNLLIGVVPFDSSFLRRLGKNLDLSGNRGLCLNPEDEFSVVKTGVDVCGKNVSSGGGLSVHSSKKKSQASRYYRSCFFANALFPFALFLGLHQRWVL.

The N-terminal stretch at 1-26 (MTMKRALPSPSSLLFFFLLITPLFLC) is a signal peptide. Residues 27–441 (QENRVSASMP…SQASRYYRSC (415 aa)) are Extracellular-facing. Asparagine 139 carries N-linked (GlcNAc...) asparagine glycosylation. 10 LRR repeats span residues 139-164 (NSSL…ISSL), 165-188 (KSLQ…IFSL), 190-212 (SLVH…LGNL), 213-236 (NNLV…ISQL), 238-260 (MLQK…VEKL), 261-284 (RSLS…ISNL), 286-308 (SLQY…LGFL), 309-331 (PKLQ…SYTK), 332-355 (LTNL…GFES), and 357-381 (PHVF…SFLR). Residues asparagine 334, asparagine 363, and asparagine 416 are each glycosylated (N-linked (GlcNAc...) asparagine). Residues 442 to 462 (FFANALFPFALFLGLHQRWVL) form a helical membrane-spanning segment.

Belongs to the RLP family.

The protein localises to the cell membrane. The protein is Receptor like protein 29 of Arabidopsis thaliana (Mouse-ear cress).